The chain runs to 285 residues: Bifunctional protein FolD (285 aa).

NADP(+)-binding positions include 165 to 167 (GRS) and Ser190.

Belongs to the tetrahydrofolate dehydrogenase/cyclohydrolase family. Homodimer.

It carries out the reaction (6R)-5,10-methylene-5,6,7,8-tetrahydrofolate + NADP(+) = (6R)-5,10-methenyltetrahydrofolate + NADPH. The catalysed reaction is (6R)-5,10-methenyltetrahydrofolate + H2O = (6R)-10-formyltetrahydrofolate + H(+). Its pathway is one-carbon metabolism; tetrahydrofolate interconversion. Functionally, catalyzes the oxidation of 5,10-methylenetetrahydrofolate to 5,10-methenyltetrahydrofolate and then the hydrolysis of 5,10-methenyltetrahydrofolate to 10-formyltetrahydrofolate. In Burkholderia thailandensis (strain ATCC 700388 / DSM 13276 / CCUG 48851 / CIP 106301 / E264), this protein is Bifunctional protein FolD.